Reading from the N-terminus, the 282-residue chain is NADPH-dependent 7-cyano-7-deazaguanine reductase (282 aa).

88-90 contacts substrate; that stretch reads IES. 90–91 is a binding site for NADPH; sequence SK. The active-site Thioimide intermediate is C190. D197 serves as the catalytic Proton donor. Position 229 to 230 (229 to 230) interacts with substrate; it reads HE. 258–259 is a binding site for NADPH; the sequence is RG.

Belongs to the GTP cyclohydrolase I family. QueF type 2 subfamily. As to quaternary structure, homodimer.

The protein resides in the cytoplasm. It carries out the reaction 7-aminomethyl-7-carbaguanine + 2 NADP(+) = 7-cyano-7-deazaguanine + 2 NADPH + 3 H(+). It participates in tRNA modification; tRNA-queuosine biosynthesis. In terms of biological role, catalyzes the NADPH-dependent reduction of 7-cyano-7-deazaguanine (preQ0) to 7-aminomethyl-7-deazaguanine (preQ1). The protein is NADPH-dependent 7-cyano-7-deazaguanine reductase of Citrobacter koseri (strain ATCC BAA-895 / CDC 4225-83 / SGSC4696).